We begin with the raw amino-acid sequence, 496 residues long: 3-octaprenyl-4-hydroxybenzoate carboxy-lyase (496 aa).

A Mn(2+)-binding site is contributed by Asn-181. Residues 184–186 (IYR), 198–200 (RWL), and 203–204 (RG) contribute to the prenylated FMN site. A Mn(2+)-binding site is contributed by Glu-247. The Proton donor role is filled by Asp-296.

This sequence belongs to the UbiD family. As to quaternary structure, homohexamer. Prenylated FMN is required as a cofactor. Mn(2+) serves as cofactor.

It is found in the cell membrane. It carries out the reaction a 4-hydroxy-3-(all-trans-polyprenyl)benzoate + H(+) = a 2-(all-trans-polyprenyl)phenol + CO2. Its pathway is cofactor biosynthesis; ubiquinone biosynthesis. In terms of biological role, catalyzes the decarboxylation of 3-octaprenyl-4-hydroxy benzoate to 2-octaprenylphenol, an intermediate step in ubiquinone biosynthesis. The protein is 3-octaprenyl-4-hydroxybenzoate carboxy-lyase of Azoarcus sp. (strain BH72).